Reading from the N-terminus, the 745-residue chain is MERPPGLRPGAGGPWEMRERLGTGGFGNVSLYQHRELDLKIAIKSCRLELSSKNRERWCHEIQIMKKLDHANVVKACDVPEELNFLINDVPLLAMEYCSGGDLRKLLNKPENCCGLKESQILSLLSDIGSGIRYLHENKIIHRDLKPENIVLQDVGGKTIHKIIDLGYAKDVDQGSLCTSFVGTLQYLAPELFENKPYTATVDYWSFGTMVFECIAGYRPFLHHLQPFTWHEKIKKKDPKCIFACEEMTGEVRFSSHLPQPNSLCSLIVEPMESWLQLMLNWDPQQRGGPIDLTLKQPRCFALMDHILNLKIVHILNMTSAKIISFLLPCDESLHSLQSRIERETGINTGSQELLSETGISLDPRKPASQCVLDGVRGCDSYMVYLFDKSKTVYEGPFASRSLSDCVNYIVQDSKIQLPIIQLRKVWAEAVHYVSGLKEDYSRLFQGQRAAMLSLLRYNANLTKMKNTLISASQQLKAKLEFFRKSIQLDLERYSEQMTYGISSEKMLKAWKEMEEKAIHYSEVGVIGYLEDQIMSLHTEIMELQKSPYGRRQGDLMESLEQRAIDLYKQLKHRPPDHLYSDSTEMVKIIVHTVQSQDRVLKELFGHLSKLLGCKQKIIDLLPKVEVALSNIKEADNTVMFMQGKRQKEIWHLLKIACTQSSARSLVGSSLEGTVTPPVSAWLPPTLADREHPLTCVVTPQDGETLAQMIEENLNCLGHLSTIIREANEDQSSSLMSLDWSWLAE.

The 286-residue stretch at 15 to 300 (WEMRERLGTG…IDLTLKQPRC (286 aa)) folds into the Protein kinase domain. Residues 21–29 (LGTGGFGNV) and Lys-44 each bind ATP. Residue Thr-23 is modified to Phosphothreonine; by PKB/AKT1 and SGK1. Asp-144 acts as the Proton acceptor in catalysis. Residue Ser-176 is modified to Phosphoserine; by MAP3K14. Ser-180 carries the post-translational modification Phosphoserine; by SGK1. The leucine-zipper stretch occupies residues 455 to 476 (LLRYNANLTKMKNTLISASQQL). Residues 738-743 (LDWSWL) are NEMO-binding.

Belongs to the protein kinase superfamily. Ser/Thr protein kinase family. I-kappa-B kinase subfamily. In terms of assembly, component of the I-kappa-B-kinase (IKK) core complex consisting of CHUK, IKBKB and IKBKG; probably four alpha/CHUK-beta/IKBKB dimers are associated with four gamma/IKBKG subunits. The IKK core complex seems to associate with regulatory or adapter proteins to form a IKK-signalosome holo-complex. The IKK complex associates with TERF2IP/RAP1, leading to promote IKK-mediated phosphorylation of RELA/p65. Part of a complex composed of NCOA2, NCOA3, CHUK/IKKA, IKBKB, IKBKG and CREBBP. Part of a 70-90 kDa complex at least consisting of CHUK/IKKA, IKBKB, NFKBIA, RELA, ELP1 and MAP3K14. Directly interacts with TRPC4AP. May interact with TRAF2. Interacts with NALP2. May interact with MAVS/IPS1. Interacts with ARRB1 and ARRB2. Interacts with NLRC5; prevents CHUK phosphorylation and kinase activity. Interacts with PIAS1; this interaction induces PIAS1 phosphorylation. Interacts with ZNF268 isoform 2; the interaction is further increased in a TNF-alpha-dependent manner. Interacts with LRRC14. Interacts with SASH1. Directly interacts with DDX3X after the physiological activation of the TLR7 and TLR8 pathways; this interaction enhances CHUK autophosphorylation. Post-translationally, ubiquitinated by TRIM56 via 'Lys-63'-linked ubiquitination, promoting activation of CHUK/IKKA. Phosphorylated by MAP3K14/NIK, AKT and to a lesser extent by MEKK1, and dephosphorylated by PP2A. Autophosphorylated. Ubiquitous only for isoform 1, isoforms 2 and 3 are expressed predominantly in brain and T-lymphocytes.

It is found in the cytoplasm. Its subcellular location is the nucleus. It carries out the reaction L-seryl-[I-kappa-B protein] + ATP = O-phospho-L-seryl-[I-kappa-B protein] + ADP + H(+). Activated when phosphorylated and inactivated when dephosphorylated. Functionally, serine kinase that plays an essential role in the NF-kappa-B signaling pathway which is activated by multiple stimuli such as inflammatory cytokines, bacterial or viral products, DNA damages or other cellular stresses. Acts as a part of the canonical IKK complex in the conventional pathway of NF-kappa-B activation and phosphorylates inhibitors of NF-kappa-B on serine residues. These modifications allow polyubiquitination of the inhibitors and subsequent degradation by the proteasome. In turn, free NF-kappa-B is translocated into the nucleus and activates the transcription of hundreds of genes involved in immune response, growth control, or protection against apoptosis. Negatively regulates the pathway by phosphorylating the scaffold protein TAXBP1 and thus promoting the assembly of the A20/TNFAIP3 ubiquitin-editing complex (composed of A20/TNFAIP3, TAX1BP1, and the E3 ligases ITCH and RNF11). Therefore, CHUK plays a key role in the negative feedback of NF-kappa-B canonical signaling to limit inflammatory gene activation. As part of the non-canonical pathway of NF-kappa-B activation, the MAP3K14-activated CHUK/IKKA homodimer phosphorylates NFKB2/p100 associated with RelB, inducing its proteolytic processing to NFKB2/p52 and the formation of NF-kappa-B RelB-p52 complexes. In turn, these complexes regulate genes encoding molecules involved in B-cell survival and lymphoid organogenesis. Also participates in the negative feedback of the non-canonical NF-kappa-B signaling pathway by phosphorylating and destabilizing MAP3K14/NIK. Within the nucleus, phosphorylates CREBBP and consequently increases both its transcriptional and histone acetyltransferase activities. Modulates chromatin accessibility at NF-kappa-B-responsive promoters by phosphorylating histones H3 at 'Ser-10' that are subsequently acetylated at 'Lys-14' by CREBBP. Additionally, phosphorylates the CREBBP-interacting protein NCOA3. Also phosphorylates FOXO3 and may regulate this pro-apoptotic transcription factor. Phosphorylates RIPK1 at 'Ser-25' which represses its kinase activity and consequently prevents TNF-mediated RIPK1-dependent cell death. Phosphorylates AMBRA1 following mitophagy induction, promoting AMBRA1 interaction with ATG8 family proteins and its mitophagic activity. This is Inhibitor of nuclear factor kappa-B kinase subunit alpha (Chuk) from Mus musculus (Mouse).